A 278-amino-acid chain; its full sequence is S-formylglutathione hydrolase YeiG (278 aa).

Residues Ser-145, Asp-223, and His-256 each act as charge relay system in the active site.

Belongs to the esterase D family.

The enzyme catalyses S-formylglutathione + H2O = formate + glutathione + H(+). Functionally, serine hydrolase involved in the detoxification of formaldehyde. Hydrolyzes S-formylglutathione to glutathione and formate. In Escherichia coli O139:H28 (strain E24377A / ETEC), this protein is S-formylglutathione hydrolase YeiG (yeiG).